Reading from the N-terminus, the 127-residue chain is Large ribosomal subunit protein eL8 (127 aa).

It belongs to the eukaryotic ribosomal protein eL8 family. As to quaternary structure, part of the 50S ribosomal subunit. Component of box C/D small ribonucleoprotein (sRNP) particles that contain rpl7ae, FlpA and nop5, plus a guide RNA. These sRNP particles form homodimers, giving rise to an asymmetric holoenzyme. Probably part of the RNase P complex.

The protein localises to the cytoplasm. Its function is as follows. Multifunctional RNA-binding protein that recognizes the K-turn motif in ribosomal RNA, the RNA component of RNase P, box H/ACA, box C/D and box C'/D' sRNAs. This Saccharolobus solfataricus (strain ATCC 35092 / DSM 1617 / JCM 11322 / P2) (Sulfolobus solfataricus) protein is Large ribosomal subunit protein eL8.